Reading from the N-terminus, the 273-residue chain is Phosphate import ATP-binding protein PstB (273 aa).

Residues 17 to 259 (LSAENLSIFY…DKTNNIFQNP (243 aa)) enclose the ABC transporter domain. 49–56 (GPSGCGKS) is a binding site for ATP.

This sequence belongs to the ABC transporter superfamily. Phosphate importer (TC 3.A.1.7) family. As to quaternary structure, the complex is composed of two ATP-binding proteins (PstB), two transmembrane proteins (PstC and PstA) and a solute-binding protein (PstS).

Its subcellular location is the cell inner membrane. It catalyses the reaction phosphate(out) + ATP + H2O = ADP + 2 phosphate(in) + H(+). Its function is as follows. Part of the ABC transporter complex PstSACB involved in phosphate import. Responsible for energy coupling to the transport system. This is Phosphate import ATP-binding protein PstB from Trichodesmium erythraeum (strain IMS101).